The following is a 310-amino-acid chain: uncharacterized protein (310 aa).

This is an uncharacterized protein from Methanocaldococcus jannaschii (strain ATCC 43067 / DSM 2661 / JAL-1 / JCM 10045 / NBRC 100440) (Methanococcus jannaschii).